A 225-amino-acid polypeptide reads, in one-letter code: Cytidylate kinase (225 aa).

12–20 (GPSGAGKGT) contributes to the ATP binding site.

This sequence belongs to the cytidylate kinase family. Type 1 subfamily.

The protein resides in the cytoplasm. It catalyses the reaction CMP + ATP = CDP + ADP. The catalysed reaction is dCMP + ATP = dCDP + ADP. The sequence is that of Cytidylate kinase from Vibrio cholerae serotype O1 (strain ATCC 39315 / El Tor Inaba N16961).